We begin with the raw amino-acid sequence, 253 residues long: Aminoglycoside nucleotidyltransferase (4') (253 aa).

Homodimer.

It catalyses the reaction kanamycin A + ATP = 4'-adenylylkanamycin A + diphosphate. The catalysed reaction is amikacin + ATP = 4'-adenylylamikacin + diphosphate. It carries out the reaction neomycin B + ATP = 4'-adenylylneomycin B + diphosphate. The enzyme catalyses paromomycin + ATP = 4'-adenylylparomomycin + diphosphate. It catalyses the reaction ribostamycin + ATP = 4'-adenylylribostamycin + diphosphate. The catalysed reaction is tobramycin + ATP = 4'-adenylyltobramycin + diphosphate. It carries out the reaction kanamycin A + CTP = 4'-cytidylylkanamycin A + diphosphate. The enzyme catalyses kanamycin A + GTP = 4'-guanylylkanamycin A + diphosphate. It catalyses the reaction kanamycin A + ITP = 4'-inosinylylkanamycin A + diphosphate. The catalysed reaction is dTTP + kanamycin A = 4'-thymidylylkanamycin A + diphosphate. It carries out the reaction kanamycin A + UTP = 4'-uridylylkanamycin A + diphosphate. The enzyme catalyses kanamycin A + dATP = 4'-(2'-deoxyadenylyl)kanamycin A + diphosphate. It catalyses the reaction kanamycin A + dCTP = 4'-(2'-deoxycytidylyl)kanamycin A + diphosphate. The catalysed reaction is kanamycin A + dGTP = 4'-(2'-deoxyguanylyl)kanamycin A + diphosphate. It carries out the reaction dUTP + kanamycin A = 4'-(2'-deoxyuridylyl)kanamycin A + diphosphate. The enzyme catalyses amikacin + GTP = 4'-guanylylamikacin + diphosphate. It catalyses the reaction amikacin + ITP = 4'-inosinylylamikacin + diphosphate. The catalysed reaction is amikacin + CTP = 4'-cytidylylamikacin + diphosphate. It carries out the reaction amikacin + UTP = 4'-uridylylamikacin + diphosphate. The enzyme catalyses amikacin + dTTP = 4'-thymidylylamikacin + diphosphate. In terms of biological role, inactivates aminoglycoside antibiotics such as kanamycin by catalyzing the transfer of a nucleotidyl group from nucleoside triphosphates such as (d)ATP to the 4'-hydroxyl group of the aminoglycoside. This Bacillus sp protein is Aminoglycoside nucleotidyltransferase (4').